We begin with the raw amino-acid sequence, 268 residues long: Deoxyuridine 5'-triphosphate nucleotidohydrolase (268 aa).

Substrate contacts are provided by residues R172–S174 and F263–G264.

This sequence belongs to the dUTPase family. Requires Mg(2+) as cofactor.

It catalyses the reaction dUTP + H2O = dUMP + diphosphate + H(+). Functionally, involved in nucleotide metabolism: produces dUMP, the immediate precursor of thymidine nucleotides and decreases the intracellular concentration of dUTP to avoid uracil incorporation into viral DNA. In Suid herpesvirus 1 (strain Kaplan) (SuHV-1), this protein is Deoxyuridine 5'-triphosphate nucleotidohydrolase.